We begin with the raw amino-acid sequence, 177 residues long: RNA pyrophosphohydrolase (177 aa).

The region spanning 6–149 (GYRPNVGIVI…KRDVYRRVMK (144 aa)) is the Nudix hydrolase domain. The Nudix box signature appears at 38 to 59 (GGINPGESAEQAMYRELFEEVG).

Belongs to the Nudix hydrolase family. RppH subfamily. Requires a divalent metal cation as cofactor.

Its function is as follows. Accelerates the degradation of transcripts by removing pyrophosphate from the 5'-end of triphosphorylated RNA, leading to a more labile monophosphorylated state that can stimulate subsequent ribonuclease cleavage. This chain is RNA pyrophosphohydrolase, found in Cronobacter sakazakii (strain ATCC BAA-894) (Enterobacter sakazakii).